The following is a 303-amino-acid chain: Ribosomal RNA small subunit methyltransferase H (303 aa).

Residues 32–34 (GGH), Asp52, Phe78, Asp99, and Gln106 contribute to the S-adenosyl-L-methionine site.

This sequence belongs to the methyltransferase superfamily. RsmH family.

The protein resides in the cytoplasm. The catalysed reaction is cytidine(1402) in 16S rRNA + S-adenosyl-L-methionine = N(4)-methylcytidine(1402) in 16S rRNA + S-adenosyl-L-homocysteine + H(+). In terms of biological role, specifically methylates the N4 position of cytidine in position 1402 (C1402) of 16S rRNA. The protein is Ribosomal RNA small subunit methyltransferase H of Acinetobacter baylyi (strain ATCC 33305 / BD413 / ADP1).